Reading from the N-terminus, the 417-residue chain is Actin-related protein 10 (417 aa).

The protein belongs to the actin family. Subunit of dynactin, a multiprotein complex part of a tripartite complex with dynein and a adapter, such as BICDL1, BICD2 or HOOK3. The dynactin complex is built around ACTR1A/ACTB filament and consists of an actin-related filament composed of a shoulder domain, a pointed end and a barbed end. Its length is defined by its flexible shoulder domain. The soulder is composed of 2 DCTN1 subunits, 4 DCTN2 and 2 DCTN3. The 4 DCNT2 (via N-terminus) bind the ACTR1A filament and act as molecular rulers to determine the length. The pointed end is important for binding dynein-dynactin cargo adapters. Consists of 4 subunits: ACTR10, DCNT4, DCTN5 and DCTN6. The barbed end is composed of a CAPZA1:CAPZB heterodimers, which binds ACTR1A/ACTB filament and dynactin and stabilizes dynactin.

It is found in the cytoplasm. It localises to the cytoskeleton. Functionally, part of the dynactin complex that activates the molecular motor dynein for ultra-processive transport along microtubules. The sequence is that of Actin-related protein 10 (Actr10) from Mus musculus (Mouse).